Reading from the N-terminus, the 142-residue chain is Lutropin subunit beta (142 aa).

A signal peptide spans 1-21 (MEMLQGLLLLWLLLNVGGVWT). 6 disulfide bridges follow: C30–C78, C44–C93, C47–C131, C55–C109, C59–C111, and C114–C121. N-linked (GlcNAc...) asparagine glycosylation occurs at N34.

It belongs to the glycoprotein hormones subunit beta family. In terms of assembly, heterodimer of a common alpha chain and a unique beta chain which confers biological specificity to thyrotropin, lutropin, follitropin and gonadotropin.

It localises to the secreted. In terms of biological role, promotes spermatogenesis and ovulation by stimulating the testes and ovaries to synthesize steroids. This is Lutropin subunit beta (LHB) from Panthera tigris altaica (Siberian tiger).